Consider the following 89-residue polypeptide: Elongation factor 1-beta (89 aa).

The protein belongs to the EF-1-beta/EF-1-delta family.

Its function is as follows. Promotes the exchange of GDP for GTP in EF-1-alpha/GDP, thus allowing the regeneration of EF-1-alpha/GTP that could then be used to form the ternary complex EF-1-alpha/GTP/AAtRNA. This Methanosarcina mazei (strain ATCC BAA-159 / DSM 3647 / Goe1 / Go1 / JCM 11833 / OCM 88) (Methanosarcina frisia) protein is Elongation factor 1-beta.